The sequence spans 207 residues: Interleukin-6 (207 aa).

Residues 1–20 (MNSLSTSAFSLGLLLVMATA) form the signal peptide. C67 and C73 are oxidised to a cystine. S76 is modified (phosphoserine). C96 and C106 are oxidised to a cystine.

Belongs to the IL-6 superfamily. Component of a hexamer of two molecules each of IL6, IL6R and IL6ST; first binds to IL6R to associate with the signaling subunit IL6ST. Interacts with IL6R (via the N-terminal ectodomain); this interaction may be affected by IL6R-binding with SORL1, hence decreasing IL6 cis signaling. Interacts with SORL1 (via the N-terminal ectodomain); this interaction leads to IL6 internalization and lysosomal degradation. May form a trimeric complex with the soluble SORL1 ectodomain and soluble IL6R receptor; this interaction might stabilize circulating IL6, hence promoting IL6 trans signaling.

It is found in the secreted. Cytokine with a wide variety of biological functions in immunity, tissue regeneration, and metabolism. Binds to IL6R, then the complex associates to the signaling subunit IL6ST/gp130 to trigger the intracellular IL6-signaling pathway. The interaction with the membrane-bound IL6R and IL6ST stimulates 'classic signaling', whereas the binding of IL6 and soluble IL6R to IL6ST stimulates 'trans-signaling'. Alternatively, 'cluster signaling' occurs when membrane-bound IL6:IL6R complexes on transmitter cells activate IL6ST receptors on neighboring receiver cells. Its function is as follows. IL6 is a potent inducer of the acute phase response. Rapid production of IL6 contributes to host defense during infection and tissue injury, but excessive IL6 synthesis is involved in disease pathology. In the innate immune response, is synthesized by myeloid cells, such as macrophages and dendritic cells, upon recognition of pathogens through toll-like receptors (TLRs) at the site of infection or tissue injury. In the adaptive immune response, is required for the differentiation of B cells into immunoglobulin-secreting cells. Plays a major role in the differentiation of CD4(+) T cell subsets. Essential factor for the development of T follicular helper (Tfh) cells that are required for the induction of germinal-center formation. Required to drive naive CD4(+) T cells to the Th17 lineage. Also required for proliferation of myeloma cells and the survival of plasmablast cells. In terms of biological role, acts as an essential factor in bone homeostasis and on vessels directly or indirectly by induction of VEGF, resulting in increased angiogenesis activity and vascular permeability. Induces, through 'trans-signaling' and synergistically with IL1B and TNF, the production of VEGF. Involved in metabolic controls, is discharged into the bloodstream after muscle contraction increasing lipolysis and improving insulin resistance. 'Trans-signaling' in central nervous system also regulates energy and glucose homeostasis. Mediates, through GLP-1, crosstalk between insulin-sensitive tissues, intestinal L cells and pancreatic islets to adapt to changes in insulin demand. Also acts as a myokine. Plays a protective role during liver injury, being required for maintenance of tissue regeneration. Also has a pivotal role in iron metabolism by regulating HAMP/hepcidin expression upon inflammation or bacterial infection. Through activation of IL6ST-YAP-NOTCH pathway, induces inflammation-induced epithelial regeneration. This Vulpes vulpes (Red fox) protein is Interleukin-6 (IL6).